Consider the following 283-residue polypeptide: Malonyl-[acyl-carrier protein] O-methyltransferase (283 aa).

It belongs to the methyltransferase superfamily.

It catalyses the reaction malonyl-[ACP] + S-adenosyl-L-methionine = malonyl-[ACP] methyl ester + S-adenosyl-L-homocysteine. It participates in cofactor biosynthesis; biotin biosynthesis. Its function is as follows. Converts the free carboxyl group of a malonyl-thioester to its methyl ester by transfer of a methyl group from S-adenosyl-L-methionine (SAM). It allows to synthesize pimeloyl-ACP via the fatty acid synthetic pathway. The polypeptide is Malonyl-[acyl-carrier protein] O-methyltransferase (Acetivibrio thermocellus (strain ATCC 27405 / DSM 1237 / JCM 9322 / NBRC 103400 / NCIMB 10682 / NRRL B-4536 / VPI 7372) (Clostridium thermocellum)).